Here is a 227-residue protein sequence, read N- to C-terminus: MTAIAPVITIDGPSGAGKGTLCKAMAEALQWHLLDSGAIYRVLALAALHHHVDLASEDALVPLASHLDVRFVSTDGNLEVILEGEDVSGEIRTQEVANAASQVAAFPRVREALLRRQRAFREAPGLIADGRDMGTVVFPDAPVKIFLDASSEERAHRRMLQLQENGFSVNFERLLAEIKERDDRDRHRAVAPLVPAADALVLDSTRLSIEQVIEKALQYARQKLALA.

An ATP-binding site is contributed by 12–20 (GPSGAGKGT).

This sequence belongs to the cytidylate kinase family. Type 1 subfamily.

It is found in the cytoplasm. The catalysed reaction is CMP + ATP = CDP + ADP. It carries out the reaction dCMP + ATP = dCDP + ADP. This is Cytidylate kinase from Salmonella typhimurium (strain LT2 / SGSC1412 / ATCC 700720).